Consider the following 309-residue polypeptide: MNTTKRILAIQSSVCHGYVGNRAATFPLQLLGWDVDAIPTVELSNHAGYPIVKGRTLSAEQILDLYKGVSAANPSGYECLLTGYARGIGSVKAIMEIVRSVKSKNKKAFWVFDPVLGDNGRLYVEESIIPLYREMLPFADLITPNGFEAEILSGMRINSIDTAFKCVECLQQKYKVPRVVISSFVVEENGVEKLYCIGSSIYSKSFFVLIPVIPGIFRGTGDLFTALMAAHIAESPDCTESLASIKEDKLKKSVEMALSSVHEVIQKTADRISALGVEEYHPAYAELCIVNSQNSIIAPSKLFEAVYYY.

Substrate contacts are provided by S12 and Y123. ATP is bound by residues 182–183 (SS) and 209–221 (LIPVIPGIFRGTG). D222 serves as a coordination point for substrate.

This sequence belongs to the pyridoxine kinase family. It depends on a divalent metal cation as a cofactor.

It localises to the cytoplasm. The protein localises to the nucleus. It catalyses the reaction pyridoxal + ATP = pyridoxal 5'-phosphate + ADP + H(+). Required for synthesis of pyridoxal-5-phosphate from vitamin B6. The chain is Putative pyridoxal kinase C6F6.11c from Schizosaccharomyces pombe (strain 972 / ATCC 24843) (Fission yeast).